Consider the following 393-residue polypeptide: S-adenosylmethionine synthase (393 aa).

Histidine 17 contacts ATP. Residue aspartate 19 coordinates Mg(2+). Residue glutamate 45 participates in K(+) binding. Residues glutamate 58 and glutamine 106 each contribute to the L-methionine site. The flexible loop stretch occupies residues 106–116; sequence QSAHIAQGVNA. ATP-binding positions include 171–173, 237–238, aspartate 246, 252–253, alanine 269, and lysine 273; these read DAK, KF, and RK. Aspartate 246 serves as a coordination point for L-methionine. Lysine 277 is an L-methionine binding site.

The protein belongs to the AdoMet synthase family. In terms of assembly, homotetramer; dimer of dimers. Mg(2+) serves as cofactor. K(+) is required as a cofactor.

It is found in the cytoplasm. It carries out the reaction L-methionine + ATP + H2O = S-adenosyl-L-methionine + phosphate + diphosphate. Its pathway is amino-acid biosynthesis; S-adenosyl-L-methionine biosynthesis; S-adenosyl-L-methionine from L-methionine: step 1/1. Functionally, catalyzes the formation of S-adenosylmethionine (AdoMet) from methionine and ATP. The overall synthetic reaction is composed of two sequential steps, AdoMet formation and the subsequent tripolyphosphate hydrolysis which occurs prior to release of AdoMet from the enzyme. This chain is S-adenosylmethionine synthase, found in Ruegeria pomeroyi (strain ATCC 700808 / DSM 15171 / DSS-3) (Silicibacter pomeroyi).